Reading from the N-terminus, the 279-residue chain is Urease accessory protein UreD (279 aa).

This sequence belongs to the UreD family. In terms of assembly, ureD, UreF and UreG form a complex that acts as a GTP-hydrolysis-dependent molecular chaperone, activating the urease apoprotein by helping to assemble the nickel containing metallocenter of UreC. The UreE protein probably delivers the nickel.

Its subcellular location is the cytoplasm. Its function is as follows. Required for maturation of urease via the functional incorporation of the urease nickel metallocenter. The sequence is that of Urease accessory protein UreD from Streptococcus salivarius (strain 57.I).